A 172-amino-acid chain; its full sequence is MAKTSAKNIRPGELNLKEKLVHINRTAKVVKGGKRFGFNAIVVVGDKEGHVGYGLGKANEVQDAIAKGIEDGKKNVIKVPIVKGTIPHQIVAKFGSAKVMMKPATPGTGLIAGGAVRAVLEMAGIHDILTKSLGSSNPHNVVKAAIKGLQSISDAYDVGERRSKSLKEVFES.

The region spanning L16–V79 is the S5 DRBM domain.

This sequence belongs to the universal ribosomal protein uS5 family. In terms of assembly, part of the 30S ribosomal subunit. Contacts proteins S4 and S8.

With S4 and S12 plays an important role in translational accuracy. Functionally, located at the back of the 30S subunit body where it stabilizes the conformation of the head with respect to the body. This is Small ribosomal subunit protein uS5 from Pelodictyon phaeoclathratiforme (strain DSM 5477 / BU-1).